Here is a 585-residue protein sequence, read N- to C-terminus: YTH domain-containing family protein 3 (585 aa).

Disordered stretches follow at residues 1–51, 244–277, and 304–350; these read MSAT…SYPP, KPAK…MNIG, and PQPL…QPQL. The residue at position 2 (Ser2) is an N-acetylserine. The span at 15-24 shows a compositional bias: polar residues; that stretch reads NKVSVQNGSI. The residue at position 23 (Ser23) is a Phosphoserine. Residues 244 to 254 are compositionally biased toward basic residues; the sequence is KPAKPQPKLKP. Positions 329–350 are enriched in low complexity; the sequence is QQQQGPQPQAQPHQVQSQQPQL. In terms of domain architecture, YTH spans 416-550; it reads GRVFIIKSYS…EKAKQVLKII (135 aa). Residues 422–424, Asp428, 438–439, Asn468, Trp492, and Trp497 each bind RNA; these read KSY and WC.

The protein belongs to the YTHDF family. YTHDF3 subfamily. As to quaternary structure, interacts with CNOT1; promoting recruitment of the CCR4-NOT complex. Interacts with YTHDF1. Interacts with YTHDF2. Interacts with PAN3.

It localises to the cytoplasm. The protein resides in the cytosol. The protein localises to the P-body. Its subcellular location is the stress granule. Functionally, specifically recognizes and binds N6-methyladenosine (m6A)-containing RNAs, and regulates their stability. M6A is a modification present at internal sites of mRNAs and some non-coding RNAs and plays a role in mRNA stability and processing. Acts as a regulator of mRNA stability by promoting degradation of m6A-containing mRNAs via interaction with the CCR4-NOT complex or PAN3. The YTHDF paralogs (YTHDF1, YTHDF2 and YTHDF3) share m6A-containing mRNAs targets and act redundantly to mediate mRNA degradation and cellular differentiation. Acts as a negative regulator of type I interferon response by down-regulating interferon-stimulated genes (ISGs) expression: acts by binding to FOXO3 mRNAs. Binds to FOXO3 mRNAs independently of METTL3-mediated m6A modification. Can also act as a regulator of mRNA stability in cooperation with YTHDF2 by binding to m6A-containing mRNA and promoting their degradation. Recognizes and binds m6A-containing circular RNAs (circRNAs); circRNAs are generated through back-splicing of pre-mRNAs, a non-canonical splicing process promoted by dsRNA structures across circularizing exons. Promotes formation of phase-separated membraneless compartments, such as P-bodies or stress granules, by undergoing liquid-liquid phase separation upon binding to mRNAs containing multiple m6A-modified residues: polymethylated mRNAs act as a multivalent scaffold for the binding of YTHDF proteins, juxtaposing their disordered regions and thereby leading to phase separation. The resulting mRNA-YTHDF complexes then partition into different endogenous phase-separated membraneless compartments, such as P-bodies, stress granules or neuronal RNA granules. May also recognize and bind N1-methyladenosine (m1A)-containing mRNAs: inhibits trophoblast invasion by binding to m1A-methylated transcripts of IGF1R, promoting their degradation. The polypeptide is YTH domain-containing family protein 3 (Mus musculus (Mouse)).